We begin with the raw amino-acid sequence, 523 residues long: Endoglucanase 19 (523 aa).

The signal sequence occupies residues 1-52 (MCSWSLSSHTLTSPVRQAAMEPKSSSCGGAGIRLRLLVVLHLLLLVPSSAMA). Residue aspartate 107 is the Nucleophile of the active site. The N-linked (GlcNAc...) asparagine glycan is linked to asparagine 279. Residues histidine 442, aspartate 493, and glutamate 502 contribute to the active site.

The protein belongs to the glycosyl hydrolase 9 (cellulase E) family.

Its subcellular location is the secreted. It catalyses the reaction Endohydrolysis of (1-&gt;4)-beta-D-glucosidic linkages in cellulose, lichenin and cereal beta-D-glucans.. The chain is Endoglucanase 19 from Oryza sativa subsp. japonica (Rice).